A 44-amino-acid polypeptide reads, in one-letter code: Pandinin-1 (44 aa).

Expressed by the venom gland.

The protein localises to the secreted. It localises to the target cell membrane. Functionally, disrupts cell membranes through formation of pores. Strong antimicrobial activity against Gram-positive bacteria B.subtilis, S.epidermidis, E.faecalis and S.aureus. Less active against Gram-negative bacteria P.aeruginosa and E.coli. Has no antifungal or hemolytic activity. The protein is Pandinin-1 of Pandinus imperator (Emperor scorpion).